A 1681-amino-acid chain; its full sequence is Sodium channel protein type 7 subunit alpha (1681 aa).

The Cytoplasmic segment spans residues 1 to 118; sequence MLTSPEPKGL…RRAAIKALVH (118 aa). The I repeat unit spans residues 101 to 402; sequence TLSPLNSLRR…ILTMTYEKEK (302 aa). A helical membrane pass occupies residues 119–138; that stretch reads PLFRLLILISVLTDSILMCM. Over 139–142 the chain is Extracellular; that stretch reads SNLP. Residues 143 to 168 traverse the membrane as a helical segment; it reads EWILAIENTLLGIYAFEILVKVIARG. Residues 169 to 179 are Cytoplasmic-facing; the sequence is IWAGSFSFLGD. A helical membrane pass occupies residues 180–197; the sequence is LWNWLDFSVTLFELITRF. Residues 198–201 lie on the Extracellular side of the membrane; it reads SPLS. A helical membrane pass occupies residues 202–220; sequence SFLMLKTIRTFRILKIIPL. Residues 221–238 lie on the Cytoplasmic side of the membrane; it reads NHGLQSIVMTLAQCLKKL. A helical transmembrane segment spans residues 239 to 260; sequence FGAIALALFFLAVFSLLGMGLF. Residues 261–339 are Extracellular-facing; it reads MGNLKHKCLR…PDNGFTSFDN (79 aa). Cysteine 268 and cysteine 308 are disulfide-bonded. Asparagine 277, asparagine 282, asparagine 288, and asparagine 310 each carry an N-linked (GlcNAc...) asparagine glycan. The pore-forming intramembrane region spans 340–367; the sequence is FGWSLLAMFRLMTQDYPELLYHQILYAS. Residue glycine 368 is a topological domain, extracellular. The chain crosses the membrane as a helical span at residues 369–408; sequence KVYMIFFVMISFWFAFYLTSLFLGILTMTYEKEKQRACEE. The Cytoplasmic segment spans residues 409–506; the sequence is SGGLDPKCQQ…EFADRVITHP (98 aa). Residues 488 to 757 form an II repeat; the sequence is CSPCWVKLNE…QLAMARIKSG (270 aa). A helical transmembrane segment spans residues 507 to 522; it reads LADLFLVICIVLNICF. The Extracellular segment spans residues 523 to 531; the sequence is LALEHFPMS. A helical transmembrane segment spans residues 532–560; that stretch reads EELRSLLHVGNLVFIGIYTIEMILKIIAM. The Cytoplasmic portion of the chain corresponds to 561–569; that stretch reads HPYGYFQIS. A helical transmembrane segment spans residues 570–587; sequence WNIFDSILVVLELTEILL. The Extracellular segment spans residues 588–593; that stretch reads ADVEGL. The helical transmembrane segment at 594–609 threads the bilayer; it reads AVLITVPLIFIKLGKY. Residues 610–626 lie on the Cytoplasmic side of the membrane; it reads GPPFKSLMRILGSSLMA. A helical membrane pass occupies residues 627-655; it reads LKDLVLLLCIFVYFSAVFGMKLFGRSYKD. Residues 656-673 lie on the Extracellular side of the membrane; the sequence is CVCHIKEDCQPQRWHMSD. Cystine bridges form between cysteine 658-cysteine 664 and cysteine 696-cysteine 705. An intramembrane region (pore-forming) is located at residues 674–700; that stretch reads FLHAYMTVFRILCGEWIETLWECMEVA. Position 701 (glycine 701) is a topological domain, extracellular. The chain crosses the membrane as a helical span at residues 702-732; sequence QAWCIPFYMMVILIGNLLILYLFVTLVSSFS. The Cytoplasmic portion of the chain corresponds to 733-934; that stretch reads YYDATSEVNK…KTCCKIVENS (202 aa). Residues 806–834 show a composition bias toward polar residues; sequence YKDQSSSTEKTPVTESESQSLIASPSASE. The tract at residues 806 to 875 is disordered; the sequence is YKDQSSSTEK…MKQSSSSECS (70 aa). Serine 843 carries the phosphoserine modification. Residues 916–1224 form an III repeat; it reads NGKIWKNIRK…KKQYRALKKL (309 aa). Residues 935–953 traverse the membrane as a helical segment; that stretch reads WFECFIGLVTLLCTGTLAL. Over 954 to 961 the chain is Extracellular; the sequence is EDIYIDQR. Residues 962-990 traverse the membrane as a helical segment; it reads KTTKILLEYADMIFAYIFILEMLLKWVAY. Over 991–998 the chain is Cytoplasmic; sequence GFKAFFSN. The chain crosses the membrane as a helical span at residues 999-1020; sequence NWYKLDFMVVIVFCLSLIGKTR. A topological domain (extracellular) is located at residue glutamate 1021. The helical transmembrane segment at 1022-1040 threads the bilayer; the sequence is DLNPLTSIKFLRALRVLSQ. Residues 1041-1055 lie on the Cytoplasmic side of the membrane; the sequence is FERMKVVLRALIKTT. A helical transmembrane segment spans residues 1056–1080; it reads LPTVSVFLVCLMIWLLFSVIGVQLF. The Extracellular portion of the chain corresponds to 1081–1127; that stretch reads AGKFYECIDPTKGERFPVFEVMNKSQCEKLLFNESMPWENAKLNFDN. A disulfide bond links cysteine 1087 and cysteine 1107. Asparagine 1103 and asparagine 1113 each carry an N-linked (GlcNAc...) asparagine glycan. The pore-forming intramembrane region spans 1128-1154; it reads VGNGFLSLLQVATFNGWISIMNSAIDS. The Extracellular portion of the chain corresponds to 1155-1167; the sequence is VGVNMQPSFEYNL. The chain crosses the membrane as a helical span at residues 1168–1202; it reads YMYSYFIIFVIFGLFLPLCMLIGVIIRNFNKQKIK. Residues 1203-1250 are Cytoplasmic-facing; that stretch reads QGGSNIFITVKQKKQYRALKKLLYADVQKPTPRPRNKFQGFLFDLVTH. One copy of the IV repeat lies at 1233–1531; the sequence is TPRPRNKFQG…WNRFDPDRTQ (299 aa). Residues 1251–1272 form a helical membrane-spanning segment; sequence RVFNVIIILLICFQATTIMIQK. Residues 1273–1276 lie on the Extracellular side of the membrane; the sequence is DEQS. A helical membrane pass occupies residues 1277-1305; that stretch reads PQMETAIFWMNSIFVMLFTLECILKLTAF. Topologically, residues 1306-1312 are cytoplasmic; sequence RCHYFTS. A helical membrane pass occupies residues 1313-1338; it reads AWNVHDFMVVIFSITGLLLPLTIGQY. Topologically, residues 1339-1341 are extracellular; it reads FVP. The helical transmembrane segment at 1342-1362 threads the bilayer; that stretch reads PSLVQLILLSRVIHILRPGKG. Residues 1363–1377 lie on the Cytoplasmic side of the membrane; sequence PKVFHDLMLPLILAL. Residues 1378–1402 traverse the membrane as a helical segment; that stretch reads PALLNISLLIFLVMFIYAIFGMYNF. The Extracellular segment spans residues 1403-1420; sequence AYVKKEAGINDVSNFETF. An intramembrane region (pore-forming) is located at residues 1421–1444; sequence GSSMLCLFQVTTFSGWDGMLDAIF. Over 1445-1468 the chain is Extracellular; sequence NSQWSDCDPDKINPGTQVKGDCGS. Cysteine 1451 and cysteine 1466 are oxidised to a cystine. The chain crosses the membrane as a helical span at residues 1469–1504; it reads PSVGISYFVSYILISWLIIVNMYIVLIMEFLSIPSQ. At 1505-1681 the chain is on the cytoplasmic side; the sequence is KKSRTLSEDD…EEKASIQTQI (177 aa). Basic and acidic residues predominate over residues 1647 to 1662; it reads NVSDTPAIDDRRDDLT. The segment at 1647–1681 is disordered; the sequence is NVSDTPAIDDRRDDLTSKGAHSGKIEEKASIQTQI.

This sequence belongs to the sodium channel (TC 1.A.1.10) family. SCN7A subfamily. In terms of assembly, the sodium channel formed by SCN7A is probably a heterooligomeric complex consisting of the ion conducting pore forming alpha subunit SCN7A and regulatory beta subunits such as SCN3B. Interacts with ATP1A1; activates ATP1A1 and thereby indirectly signals to nearby neurons to regulate sodium homeostasis. Not tissue specific but widely expressed. Expressed in regions of the central nervous system that control body fluid ionic balance.

Its subcellular location is the cell membrane. It catalyses the reaction Na(+)(in) = Na(+)(out). Functionally, sodium leak channel functioning as an osmosensor regulating sodium ion levels in various tissues and organs. While most sodium channels are voltage-gated, SCN7A is not and lets sodium flow through membrane along its concentration gradient. In glial cells of the central nervous system, senses body-fluid sodium levels and controls salt intake behavior as well as voluntary water intake through activation of nearby neurons to maintain appropriate sodium levels in the body. By mediating sodium influx into keratinocytes, also plays a role in skin barrier homeostasis. The protein is Sodium channel protein type 7 subunit alpha of Mus musculus (Mouse).